A 243-amino-acid chain; its full sequence is Vesicle-associated membrane protein-associated protein B/C (243 aa).

An N-acetylalanine modification is found at Ala2. Over 2 to 222 the chain is Cytoplasmic; it reads AKVEQVLSLE…PTGKEEGLST (221 aa). In terms of domain architecture, MSP spans 7–124; sequence VLSLEPQHEL…MDSKLRCVFE (118 aa). The residue at position 146 (Ser146) is a Phosphoserine. Lys147 is covalently cross-linked (Glycyl lysine isopeptide (Lys-Gly) (interchain with G-Cter in SUMO1)). Phosphothreonine is present on Thr150. Phosphoserine is present on residues Ser156, Ser158, Ser159, Ser160, and Ser206. Positions 159–196 form a coiled coil; it reads SSLDDTEVKKVMEECKRLQGEVQRLREENKQFKEEDGL. A helical; Anchor for type IV membrane protein transmembrane segment spans residues 223–243; that stretch reads RLLALVVLFFIVGVIIGKIAL.

The protein belongs to the VAMP-associated protein (VAP) (TC 9.B.17) family. Homodimer, and heterodimer with VAPA. Interacts with VAMP1 and VAMP2. Interacts (via MSP domain) with ZFYVE27. Interacts with RMDN3. Interacts with KIF5A in a ZFYVE27-dependent manner. Interacts (via MSP domain) with STARD3 (via phospho-FFAT motif). Interacts with STARD3NL (via FFAT motif). Interacts with CERT1. Interacts with PLEKHA3 and SACM1L to form a ternary complex. Interacts with VPS13A (via FFAT motif). Interacts with RB1CC1 (via phosphorylated FFAT motif), MIGA2 (via phosphorylated FFAT motif), RMDN3 (via phosphorylated FFAT motif), OSBPL1A (via FFAT motif), KCNB1 (via phosphorylated FFAT motif) and KCNB2 (via phosphorylated FFAT motif). Interacts (via MSP domain) with WDR44 (via FFAT motif); the interactions connect the endoplasmic reticulum (ER) with the endosomal tubule. As to quaternary structure, (Microbial infection) Interacts (via MSP domain) with hepatitis C virus (HCV) non-structural protein 5A (via disordered domain D3). Interacts with HCV RNA-directed RNA polymerase. In terms of tissue distribution, ubiquitous. Isoform 1 predominates.

Its subcellular location is the endoplasmic reticulum membrane. Endoplasmic reticulum (ER)-anchored protein that mediates the formation of contact sites between the ER and endosomes via interaction with FFAT motif-containing proteins such as STARD3 or WDR44. Interacts with STARD3 in a FFAT motif phosphorylation dependent manner. Via interaction with WDR44 participates in neosynthesized protein export. Participates in the endoplasmic reticulum unfolded protein response (UPR) by inducing ERN1/IRE1 activity. Involved in cellular calcium homeostasis regulation. In Homo sapiens (Human), this protein is Vesicle-associated membrane protein-associated protein B/C.